The primary structure comprises 494 residues: Alpha-amylase-related protein (494 aa).

The first 20 residues, 1-20 (MIKFALALTLCLAGASLSLA), serve as a signal peptide directing secretion. Gln-21 is subject to Pyrrolidone carboxylic acid. A disulfide bridge connects residues Cys-48 and Cys-104. The Ca(2+) site is built by Asn-118, Gln-169, and Asp-178. Cys-157 and Cys-171 form a disulfide bridge. Arg-206 is a binding site for chloride. Asp-208 functions as the Nucleophile in the catalytic mechanism. His-212 contacts Ca(2+). The active-site Proton donor is Glu-245. Asn-308 and Arg-343 together coordinate chloride. Disulfide bonds link Cys-376-Cys-382, Cys-418-Cys-441, and Cys-448-Cys-460.

The protein belongs to the glycosyl hydrolase 13 family. In terms of assembly, monomer. The cofactor is Ca(2+). Chloride is required as a cofactor.

The protein resides in the secreted. It carries out the reaction Endohydrolysis of (1-&gt;4)-alpha-D-glucosidic linkages in polysaccharides containing three or more (1-&gt;4)-alpha-linked D-glucose units.. This chain is Alpha-amylase-related protein (Amyrel), found in Drosophila auraria (Fruit fly).